The sequence spans 617 residues: Electron transfer flavoprotein-ubiquinone oxidoreductase, mitochondrial (617 aa).

The transit peptide at 1–33 directs the protein to the mitochondrion; sequence MQVLLARLACPVYQCFHAIKIKKNYLPLCATRW. An FAD-binding site is contributed by 71–85; the sequence is VVIVGAGPAGLSAAA. At K96 the chain carries N6-acetyllysine. An intramembrane segment occupies 109-130; that stretch reads IGAHTLSGACLDPRALQELFPD. K132 and K223 each carry N6-acetyllysine. Residues G305 and G306 each contribute to the a ubiquinone site. Residue K357 is modified to N6-acetyllysine. The stretch at 428-447 is an intramembrane region; sequence IGLDVTEYEDNLKKSWVWKE. S551 is subject to Phosphoserine. [4Fe-4S] cluster is bound by residues C561, C586, C589, and C592. Positions 577 to 606 constitute a 4Fe-4S ferredoxin-type domain; that stretch reads FRLQINAQNCVHCKTCDIKDPSQNINWVVP.

Belongs to the ETF-QO/FixC family. As to quaternary structure, monomer. The cofactor is [4Fe-4S] cluster. It depends on FAD as a cofactor.

Its subcellular location is the mitochondrion inner membrane. It catalyses the reaction a ubiquinone + reduced [electron-transfer flavoprotein] = a ubiquinol + oxidized [electron-transfer flavoprotein] + H(+). Functionally, accepts electrons from ETF and reduces ubiquinone. The polypeptide is Electron transfer flavoprotein-ubiquinone oxidoreductase, mitochondrial (ETFDH) (Bos taurus (Bovine)).